The chain runs to 503 residues: AMP phosphorylase (503 aa).

AMP is bound by residues Gly-168, Ser-194–Ser-199, and Thr-203. Asp-256 functions as the Proton donor in the catalytic mechanism. Residues Ser-264 and Lys-288 each coordinate AMP.

This sequence belongs to the thymidine/pyrimidine-nucleoside phosphorylase family. Type 2 subfamily. As to quaternary structure, forms an exceptionally large macromolecular structure (&gt;40-mers) in solution.

The catalysed reaction is AMP + phosphate = alpha-D-ribose 1,5-bisphosphate + adenine. It carries out the reaction CMP + phosphate = cytosine + alpha-D-ribose 1,5-bisphosphate. It catalyses the reaction UMP + phosphate = alpha-D-ribose 1,5-bisphosphate + uracil. Its activity is regulated as follows. AMP phosphorolysis is allosterically regulated by the substrate AMP. Its function is as follows. Catalyzes the conversion of AMP and phosphate to adenine and ribose 1,5-bisphosphate (R15P). Exhibits phosphorylase activity toward CMP, dCMP and UMP in addition to AMP. Functions in an archaeal AMP degradation pathway, together with R15P isomerase and RubisCO. This Thermococcus kodakarensis (strain ATCC BAA-918 / JCM 12380 / KOD1) (Pyrococcus kodakaraensis (strain KOD1)) protein is AMP phosphorylase.